The chain runs to 198 residues: Nucleoid occlusion factor SlmA (198 aa).

Residues 10–70 (NRREEILQSL…SLIEFIEDSL (61 aa)) form the HTH tetR-type domain. The H-T-H motif DNA-binding region spans 33–52 (TTAKLAASVGVSEAALYRHF). Residues 117 to 144 (EQDRLQGRINQLFERIEAQLRQVLREKR) adopt a coiled-coil conformation.

Belongs to the nucleoid occlusion factor SlmA family. As to quaternary structure, homodimer. Interacts with FtsZ.

It localises to the cytoplasm. The protein resides in the nucleoid. Functionally, required for nucleoid occlusion (NO) phenomenon, which prevents Z-ring formation and cell division over the nucleoid. Acts as a DNA-associated cell division inhibitor that binds simultaneously chromosomal DNA and FtsZ, and disrupts the assembly of FtsZ polymers. SlmA-DNA-binding sequences (SBS) are dispersed on non-Ter regions of the chromosome, preventing FtsZ polymerization at these regions. In Citrobacter koseri (strain ATCC BAA-895 / CDC 4225-83 / SGSC4696), this protein is Nucleoid occlusion factor SlmA.